Consider the following 69-residue polypeptide: Large ribosomal subunit protein uL29 (69 aa).

The protein belongs to the universal ribosomal protein uL29 family.

In Carboxydothermus hydrogenoformans (strain ATCC BAA-161 / DSM 6008 / Z-2901), this protein is Large ribosomal subunit protein uL29.